A 941-amino-acid polypeptide reads, in one-letter code: Glycine dehydrogenase (decarboxylating) (941 aa).

Position 692 is an N6-(pyridoxal phosphate)lysine (Lys-692).

This sequence belongs to the GcvP family. The glycine cleavage system is composed of four proteins: P, T, L and H. It depends on pyridoxal 5'-phosphate as a cofactor.

The enzyme catalyses N(6)-[(R)-lipoyl]-L-lysyl-[glycine-cleavage complex H protein] + glycine + H(+) = N(6)-[(R)-S(8)-aminomethyldihydrolipoyl]-L-lysyl-[glycine-cleavage complex H protein] + CO2. In terms of biological role, the glycine cleavage system catalyzes the degradation of glycine. The P protein binds the alpha-amino group of glycine through its pyridoxal phosphate cofactor; CO(2) is released and the remaining methylamine moiety is then transferred to the lipoamide cofactor of the H protein. The chain is Glycine dehydrogenase (decarboxylating) from Mycobacterium avium (strain 104).